Consider the following 88-residue polypeptide: Apolipoprotein C-I (88 aa).

The first 26 residues, 1-26 (MRLFLSLPVLVVVLAMVLEGPAPAQA), serve as a signal peptide directing secretion.

It belongs to the apolipoprotein C1 family.

It localises to the secreted. Functionally, inhibitor of lipoprotein binding to the low density lipoprotein (LDL) receptor, LDL receptor-related protein, and very low density lipoprotein (VLDL) receptor. Associates with high density lipoproteins (HDL) and the triacylglycerol-rich lipoproteins in the plasma and makes up about 10% of the protein of the VLDL and 2% of that of HDL. Appears to interfere directly with fatty acid uptake and is also the major plasma inhibitor of cholesteryl ester transfer protein (CETP). Binds free fatty acids and reduces their intracellular esterification. Modulates the interaction of APOE with beta-migrating VLDL and inhibits binding of beta-VLDL to the LDL receptor-related protein. This is Apolipoprotein C-I (APOC1) from Arctocephalus gazella (Antarctic fur seal).